The primary structure comprises 429 residues: DNA dC-&gt;dU-editing enzyme APOBEC3 (429 aa).

2 CMP/dCMP-type deaminase domains span residues 38 to 154 and 238 to 357; these read DRKD…AQVA and EEEF…LCSL. Histidine 71 serves as a coordination point for Zn(2+). The active-site Proton donor is the glutamate 73. Residues cysteine 105, cysteine 108, histidine 288, cysteine 316, and cysteine 319 each coordinate Zn(2+).

It belongs to the cytidine and deoxycytidylate deaminase family. Homodimer. The cofactor is Zn(2+).

The protein localises to the cytoplasm. It catalyses the reaction a 2'-deoxycytidine in single-stranded DNA + H2O + H(+) = a 2'-deoxyuridine in single-stranded DNA + NH4(+). In terms of biological role, DNA deaminase (cytidine deaminase) which acts as an inhibitor of retrovirus replication and retrotransposon mobility via deaminase-dependent and -independent mechanisms. Selectively targets single-stranded DNA and does not deaminate double-stranded DNA or single- or double-stranded RNA. This Rattus norvegicus (Rat) protein is DNA dC-&gt;dU-editing enzyme APOBEC3 (Apobec3).